The sequence spans 1572 residues: Multiple epidermal growth factor-like domains protein 6 (1572 aa).

The first 26 residues, 1–26 (MPVGVEARASWRVVALTLLLLPAVPA), serve as a signal peptide directing secretion. Residues 40–121 (MPHVCAEQKL…QKPGQEGCLS (82 aa)) form the EMI domain. Cystine bridges form between cysteine 44-cysteine 107, cysteine 73-cysteine 79, cysteine 106-cysteine 119, cysteine 126-cysteine 137, cysteine 133-cysteine 146, cysteine 148-cysteine 161, cysteine 167-cysteine 178, cysteine 174-cysteine 187, cysteine 189-cysteine 202, cysteine 291-cysteine 302, cysteine 298-cysteine 311, cysteine 313-cysteine 326, cysteine 418-cysteine 429, cysteine 425-cysteine 438, cysteine 440-cysteine 453, cysteine 522-cysteine 535, cysteine 529-cysteine 542, cysteine 544-cysteine 553, cysteine 566-cysteine 578, cysteine 572-cysteine 585, cysteine 587-cysteine 596, cysteine 609-cysteine 621, cysteine 615-cysteine 628, cysteine 630-cysteine 639, cysteine 788-cysteine 797, cysteine 791-cysteine 804, cysteine 806-cysteine 815, cysteine 832-cysteine 840, cysteine 834-cysteine 847, cysteine 849-cysteine 858, cysteine 871-cysteine 884, cysteine 875-cysteine 891, cysteine 893-cysteine 902, cysteine 915-cysteine 927, cysteine 921-cysteine 934, and cysteine 936-cysteine 945. The region spanning 122 to 162 (DVDECANANGGCEGPCCNTVGGFYCRCPPGYQLQGDGKTCQ) is the EGF-like 1; calcium-binding domain. The 41-residue stretch at 163–203 (DVDECRSHNGGCQHRCVNTPGSYLCECKPGFRLHTDGRTCL) folds into the EGF-like 2; calcium-binding domain. Positions 287–327 (DVDECALGLAQCAHGCLNTQGSFKCVCHAGYELGADGRQCY) constitute an EGF-like 3; calcium-binding domain. Positions 414–454 (DVDECASGHSGCEHHCSNLAGSFQCFCEAGYRLDEDRRGCT) constitute an EGF-like 4; calcium-binding domain. EGF-like domains follow at residues 518 to 554 (FGHD…IICN), 562 to 597 (FGKN…AHCE), 605 to 640 (YGKH…RFCH), 785 to 816 (QEIC…SRCQ), 829 to 859 (QMRC…LSCQ), 867 to 903 (WGPD…PQCE), 911 to 946 (FGPG…SFCE), 997 to 1032 (FGLN…PTCL), 1040 to 1075 (YGKN…LACE), 1083 to 1118 (HGAG…DKCQ), 1131 to 1161 (EEHC…SHCE), 1169 to 1204 (FGEA…PGCE), 1256 to 1291 (YGPG…ADCS), 1299 to 1334 (FGPS…GHCE), 1342 to 1377 (FGKG…PHCE), 1390 to 1420 (LLEC…QACE), and 1428 to 1463 (HGSG…QFCE). Asparagine 1000 is a glycosylation site (N-linked (GlcNAc...) asparagine). Intrachain disulfides connect cysteine 1001/cysteine 1013, cysteine 1007/cysteine 1020, cysteine 1022/cysteine 1031, cysteine 1044/cysteine 1056, cysteine 1050/cysteine 1063, cysteine 1065/cysteine 1074, cysteine 1087/cysteine 1099, cysteine 1093/cysteine 1106, cysteine 1108/cysteine 1117, cysteine 1134/cysteine 1142, cysteine 1136/cysteine 1149, cysteine 1151/cysteine 1160, cysteine 1173/cysteine 1185, cysteine 1177/cysteine 1192, cysteine 1194/cysteine 1203, cysteine 1260/cysteine 1272, cysteine 1266/cysteine 1279, cysteine 1281/cysteine 1290, cysteine 1303/cysteine 1315, cysteine 1309/cysteine 1322, cysteine 1324/cysteine 1333, cysteine 1346/cysteine 1358, cysteine 1352/cysteine 1365, cysteine 1367/cysteine 1376, cysteine 1393/cysteine 1401, cysteine 1395/cysteine 1408, cysteine 1410/cysteine 1419, cysteine 1432/cysteine 1444, cysteine 1438/cysteine 1451, and cysteine 1453/cysteine 1462.

The protein localises to the secreted. The polypeptide is Multiple epidermal growth factor-like domains protein 6 (Megf6) (Mus musculus (Mouse)).